Here is a 470-residue protein sequence, read N- to C-terminus: Glutamate--tRNA ligase (470 aa).

Positions 9-19 (PSPTGFLHVGG) match the 'HIGH' region motif. The 'KMSKS' region signature appears at 236 to 240 (RLSKR). Position 239 (lysine 239) interacts with ATP.

This sequence belongs to the class-I aminoacyl-tRNA synthetase family. Glutamate--tRNA ligase type 1 subfamily. Monomer.

It is found in the cytoplasm. It carries out the reaction tRNA(Glu) + L-glutamate + ATP = L-glutamyl-tRNA(Glu) + AMP + diphosphate. Catalyzes the attachment of glutamate to tRNA(Glu) in a two-step reaction: glutamate is first activated by ATP to form Glu-AMP and then transferred to the acceptor end of tRNA(Glu). This chain is Glutamate--tRNA ligase, found in Legionella pneumophila (strain Corby).